A 343-amino-acid polypeptide reads, in one-letter code: MMKKNQTMISEFLLLGLPIQPEQQNLFYALFLAVYLTTLLGNLLVIVLIRLDSHLHMPMYLCLSNLSFSDLCFSSVTMPKLLQNMQSQNPSIPFADCLAQMYFHLFYGVLESFLLVVMAYHCYVAICFPLHYTTIMSPKCCLGLLTLSWLLTTAHATLHTLLMARLSFCAENVIPHFFCDTSTLLKLACSNTQVNGWVMFFMGGLILVIPFLLLIMSCARIVSTILRVPSTGGIQKAFSTCGPHLSVVSLFYGTIIGLYLCPLTNHNTVKDTVMAVMYTGVTHMLNPFIYSLRNRDMRGNPGQSLQHKENFFVFKIVIVGILPLLNLVGVVKLIMKYHSKSVA.

At M1–Y28 the chain is on the extracellular side. N5 carries an N-linked (GlcNAc...) asparagine glycan. Residues A29 to I49 form a helical membrane-spanning segment. Residues R50–Y107 lie on the Cytoplasmic side of the membrane. Residues C97 and C179 are joined by a disulfide bond. Residues G108–F128 form a helical membrane-spanning segment. The Extracellular segment spans residues P129–C141. The helical transmembrane segment at L142 to L162 threads the bilayer. The Cytoplasmic portion of the chain corresponds to M163 to N195. Residues G196–M216 traverse the membrane as a helical segment. Residues S217–G242 are Extracellular-facing. A helical transmembrane segment spans residues P243–L263. Over T264–D271 the chain is Cytoplasmic. Residues T272–L292 form a helical membrane-spanning segment. The Extracellular segment spans residues R293 to N310. Residues F311–V331 form a helical membrane-spanning segment. Topologically, residues K332–A343 are cytoplasmic.

The protein belongs to the G-protein coupled receptor 1 family.

It is found in the cell membrane. Odorant receptor. The chain is Olfactory receptor 1E3 (OR1E3) from Homo sapiens (Human).